The sequence spans 343 residues: Small ribosomal subunit biogenesis GTPase RsgA (343 aa).

A CP-type G domain is found at 116–275; sequence RGQLKPVAAN…LIDSPGIREF (160 aa). Residues 163-166 and 217-225 contribute to the GTP site; these read NKAD and GQSGVGKSS. Zn(2+) is bound by residues cysteine 299, cysteine 304, histidine 306, and cysteine 312.

It belongs to the TRAFAC class YlqF/YawG GTPase family. RsgA subfamily. Monomer. Associates with 30S ribosomal subunit, binds 16S rRNA. It depends on Zn(2+) as a cofactor.

The protein localises to the cytoplasm. In terms of biological role, one of several proteins that assist in the late maturation steps of the functional core of the 30S ribosomal subunit. Helps release RbfA from mature subunits. May play a role in the assembly of ribosomal proteins into the subunit. Circularly permuted GTPase that catalyzes slow GTP hydrolysis, GTPase activity is stimulated by the 30S ribosomal subunit. This Pseudomonas fluorescens (strain ATCC BAA-477 / NRRL B-23932 / Pf-5) protein is Small ribosomal subunit biogenesis GTPase RsgA.